Consider the following 144-residue polypeptide: Large ribosomal subunit protein uL15 (144 aa).

Positions 20–49 (GRGIGSGLGKTGGRGHKGQKSRSGGFHKVG) are disordered. The span at 21-31 (RGIGSGLGKTG) shows a compositional bias: gly residues.

It belongs to the universal ribosomal protein uL15 family. As to quaternary structure, part of the 50S ribosomal subunit.

Binds to the 23S rRNA. The protein is Large ribosomal subunit protein uL15 of Neisseria meningitidis serogroup C (strain 053442).